The chain runs to 202 residues: LexA repressor (202 aa).

A DNA-binding region (H-T-H motif) is located at residues 29-49 (VREICTAVGLKSTSTVHSYLE). Catalysis depends on for autocatalytic cleavage activity residues S125 and K162.

The protein belongs to the peptidase S24 family. As to quaternary structure, homodimer.

It carries out the reaction Hydrolysis of Ala-|-Gly bond in repressor LexA.. In terms of biological role, represses a number of genes involved in the response to DNA damage (SOS response), including recA and lexA. In the presence of single-stranded DNA, RecA interacts with LexA causing an autocatalytic cleavage which disrupts the DNA-binding part of LexA, leading to derepression of the SOS regulon and eventually DNA repair. In Clostridium kluyveri (strain NBRC 12016), this protein is LexA repressor.